The chain runs to 74 residues: NAD(P)H-quinone oxidoreductase subunit L (74 aa).

Transmembrane regions (helical) follow at residues 5–25 and 43–63; these read LIIAALYLALAGAYLLVVPAA and AFMYFLVFFFFPGLLLLAPLL.

Belongs to the complex I NdhL subunit family. NDH-1 can be composed of about 15 different subunits; different subcomplexes with different compositions have been identified which probably have different functions.

Its subcellular location is the cellular thylakoid membrane. The enzyme catalyses a plastoquinone + NADH + (n+1) H(+)(in) = a plastoquinol + NAD(+) + n H(+)(out). It catalyses the reaction a plastoquinone + NADPH + (n+1) H(+)(in) = a plastoquinol + NADP(+) + n H(+)(out). Its function is as follows. NDH-1 shuttles electrons from an unknown electron donor, via FMN and iron-sulfur (Fe-S) centers, to quinones in the respiratory and/or the photosynthetic chain. The immediate electron acceptor for the enzyme in this species is believed to be plastoquinone. Couples the redox reaction to proton translocation, and thus conserves the redox energy in a proton gradient. Cyanobacterial NDH-1 also plays a role in inorganic carbon-concentration. This chain is NAD(P)H-quinone oxidoreductase subunit L, found in Synechococcus elongatus (strain ATCC 33912 / PCC 7942 / FACHB-805) (Anacystis nidulans R2).